A 302-amino-acid polypeptide reads, in one-letter code: ATP synthase mitochondrial F1 complex assembly factor 1 (302 aa).

This sequence belongs to the ATP11 family. Interacts with ATP5F1B; involved in the assembly of the F1 component of the mitochondrial ATP synthase (ATPase).

The protein resides in the mitochondrion inner membrane. In terms of biological role, has a complex stabilizing activity in the assembly of the mitochondrial F1-F0 complex. The sequence is that of ATP synthase mitochondrial F1 complex assembly factor 1 (atpaf1) from Danio rerio (Zebrafish).